An 804-amino-acid chain; its full sequence is Phenylalanine--tRNA ligase beta subunit (804 aa).

A tRNA-binding domain is found at 40–153; that stretch reads PLPDLRVVVG…SSYAVGEPFA (114 aa). One can recognise a B5 domain in the interval 400 to 476; it reads PALLVLPFRP…RLHGYDNIEA (77 aa). Positions 454, 460, 463, and 464 each coordinate Mg(2+). In terms of domain architecture, FDX-ACB spans 710 to 802; that stretch reads SKFPAVQRDL…AESKLGAVIR (93 aa).

The protein belongs to the phenylalanyl-tRNA synthetase beta subunit family. Type 1 subfamily. In terms of assembly, tetramer of two alpha and two beta subunits. It depends on Mg(2+) as a cofactor.

Its subcellular location is the cytoplasm. It catalyses the reaction tRNA(Phe) + L-phenylalanine + ATP = L-phenylalanyl-tRNA(Phe) + AMP + diphosphate + H(+). The polypeptide is Phenylalanine--tRNA ligase beta subunit (Chlorobium luteolum (strain DSM 273 / BCRC 81028 / 2530) (Pelodictyon luteolum)).